Consider the following 519-residue polypeptide: Serine/threonine-protein kinase RIO3 (519 aa).

5 positions are modified to phosphoserine: S8, S112, S125, S127, and S128. The disordered stretch occupies residues 122–159 (FEDSDSSEDEVDWQDTRDDPYRPAKPIPTPKKGFIGKG). Residues 124–134 (DSDSSEDEVDW) show a composition bias toward acidic residues. One can recognise a Protein kinase domain in the interval 251–519 (ETITGCISTG…DGSPPVLSAD (269 aa)). ATP is bound by residues 257-265 (ISTGKESVV) and K290. D406 serves as the catalytic Proton acceptor. S512 carries the phosphoserine modification.

This sequence belongs to the protein kinase superfamily. RIO-type Ser/Thr kinase family. In terms of assembly, interacts with CASP10. Interacts with IRF3; RIOK3 probably mediates the interaction of TBK1 with IRF3. Associated with 40S pre-ribosomal particles. Requires Mg(2+) as cofactor. Post-translationally, autophosphorylated (in vitro).

The protein localises to the cytoplasm. The catalysed reaction is L-seryl-[protein] + ATP = O-phospho-L-seryl-[protein] + ADP + H(+). It carries out the reaction L-threonyl-[protein] + ATP = O-phospho-L-threonyl-[protein] + ADP + H(+). In terms of biological role, involved in regulation of type I interferon (IFN)-dependent immune response which plays a critical role in the innate immune response against DNA and RNA viruses. May act as an adapter protein essential for the recruitment of TBK1 to IRF3. Phosphorylates IFIH1 on 'Ser-828' interfering with IFIH1 filament assembly on long dsRNA and resulting in attenuated IFIH1-signaling. Can inhibit CASP10 isoform 7-mediated activation of the NF-kappaB signaling pathway. May play a role in the biogenesis of the 40S ribosomal subunit. Involved in the processing of 21S pre-rRNA to the mature 18S rRNA. This is Serine/threonine-protein kinase RIO3 (Riok3) from Mus musculus (Mouse).